A 473-amino-acid polypeptide reads, in one-letter code: Glucose-1-phosphate adenylyltransferase small subunit, chloroplastic/amyloplastic (473 aa).

The interval 1 to 36 (MDVPLASKTFPSPSPSKREQCNIDGHKSSSKHADLN) is disordered. The segment covering 16 to 36 (SKREQCNIDGHKSSSKHADLN) has biased composition (basic and acidic residues).

This sequence belongs to the bacterial/plant glucose-1-phosphate adenylyltransferase family. Heterotetramer. In terms of tissue distribution, abundantly expressed in the whole grains, a slightly less abundant expression is seen in leaves, while a low level expression is seen in the roots. A greater expression is seen in the endosperm than in the embryo and pericarp layers.

Its subcellular location is the plastid. It is found in the chloroplast. The protein resides in the amyloplast. It carries out the reaction alpha-D-glucose 1-phosphate + ATP + H(+) = ADP-alpha-D-glucose + diphosphate. The protein operates within glycan biosynthesis; starch biosynthesis. With respect to regulation, insensitive to 3'phosphoglycerate and orthophosphate. This protein plays a role in synthesis of starch. It catalyzes the synthesis of the activated glycosyl donor, ADP-glucose from Glc-1-P and ATP. The polypeptide is Glucose-1-phosphate adenylyltransferase small subunit, chloroplastic/amyloplastic (AGP-S) (Triticum aestivum (Wheat)).